We begin with the raw amino-acid sequence, 335 residues long: Vitamin B12 import system permease protein BtuC (335 aa).

Transmembrane regions (helical) follow at residues Leu-25 to Trp-45, Leu-67 to Phe-87, Gly-95 to Gly-114, Leu-118 to Gly-140, Leu-153 to Phe-173, Leu-200 to Phe-220, Val-243 to Ile-263, Cys-286 to Phe-306, and Ala-308 to Leu-328.

The protein belongs to the binding-protein-dependent transport system permease family. FecCD subfamily. As to quaternary structure, the complex is composed of two ATP-binding proteins (BtuD), two transmembrane proteins (BtuC) and a solute-binding protein (BtuF).

The protein resides in the cell inner membrane. Part of the ABC transporter complex BtuCDF involved in vitamin B12 import. Involved in the translocation of the substrate across the membrane. In Yersinia enterocolitica serotype O:8 / biotype 1B (strain NCTC 13174 / 8081), this protein is Vitamin B12 import system permease protein BtuC.